We begin with the raw amino-acid sequence, 446 residues long: MKVVLPDGRIPRRWYNILPDLPEPLAPPLDPETNEPVDPKKLERIFAKELVKQEMSTKRYIKIPEEVRKMYSKIGRPTPLFRATNLEKYLNTPARIYFKFEGATVTGSHKINTALAQAYYAKKEGIERLVTETGAGQWGTALSLAGALMGIKVRVYMARASYEQKPYRKVLMRIYGAEVFPSPSENTEIGKRFLSENPNHPGSLGIAISEAIEDVLKDEKARYSLGSVLNHVLMHQTVIGLEAKQQMEEFEEPDVIIGCVGGGSNFAGLAYPFVKEVLDGDNEYEFIAVEPKAAPSMTRGVYTYDFGDSGELTPKLKMHTLGHRYHVPPIHAGGLRYHGVAPTLSVLVNNGIVKPIAYHQTEVFEAAALFAKLEGIVPAPESAHAIKATIDKAIEAKREGKEIVILFNLSGHGLLDLHGYEEYLEGRLQDYEPKDLPISNPLNPKP.

Lysine 110 is subject to N6-(pyridoxal phosphate)lysine.

Belongs to the TrpB family. As to quaternary structure, tetramer of two alpha and two beta chains. It depends on pyridoxal 5'-phosphate as a cofactor.

It carries out the reaction (1S,2R)-1-C-(indol-3-yl)glycerol 3-phosphate + L-serine = D-glyceraldehyde 3-phosphate + L-tryptophan + H2O. It participates in amino-acid biosynthesis; L-tryptophan biosynthesis; L-tryptophan from chorismate: step 5/5. Its function is as follows. The beta subunit is responsible for the synthesis of L-tryptophan from indole and L-serine. In Pyrococcus furiosus (strain ATCC 43587 / DSM 3638 / JCM 8422 / Vc1), this protein is Tryptophan synthase beta chain 2 (trpB2).